We begin with the raw amino-acid sequence, 262 residues long: 1-(5-phosphoribosyl)-5-[(5-phosphoribosylamino)methylideneamino] imidazole-4-carboxamide isomerase (262 aa).

Aspartate 8 serves as the catalytic Proton acceptor. Aspartate 129 serves as the catalytic Proton donor. Positions lysine 243–glycine 262 are disordered.

The protein belongs to the HisA/HisF family.

It is found in the cytoplasm. The enzyme catalyses 1-(5-phospho-beta-D-ribosyl)-5-[(5-phospho-beta-D-ribosylamino)methylideneamino]imidazole-4-carboxamide = 5-[(5-phospho-1-deoxy-D-ribulos-1-ylimino)methylamino]-1-(5-phospho-beta-D-ribosyl)imidazole-4-carboxamide. The protein operates within amino-acid biosynthesis; L-histidine biosynthesis; L-histidine from 5-phospho-alpha-D-ribose 1-diphosphate: step 4/9. This chain is 1-(5-phosphoribosyl)-5-[(5-phosphoribosylamino)methylideneamino] imidazole-4-carboxamide isomerase, found in Desulforudis audaxviator (strain MP104C).